The sequence spans 361 residues: NAD(P)H-quinone oxidoreductase subunit 1, chloroplastic (361 aa).

A run of 6 helical transmembrane segments spans residues 25 to 45 (IWLL…VLVI), 102 to 122 (VAVV…HLVL), 125 to 145 (LSIG…GLLM), 246 to 266 (YSGI…LVSS), 298 to 318 (VFGT…FLFI), and 334 to 354 (LLNL…LLTT).

Belongs to the complex I subunit 1 family. In terms of assembly, NDH is composed of at least 16 different subunits, 5 of which are encoded in the nucleus.

The protein resides in the plastid. It localises to the chloroplast thylakoid membrane. The enzyme catalyses a plastoquinone + NADH + (n+1) H(+)(in) = a plastoquinol + NAD(+) + n H(+)(out). It carries out the reaction a plastoquinone + NADPH + (n+1) H(+)(in) = a plastoquinol + NADP(+) + n H(+)(out). Its function is as follows. NDH shuttles electrons from NAD(P)H:plastoquinone, via FMN and iron-sulfur (Fe-S) centers, to quinones in the photosynthetic chain and possibly in a chloroplast respiratory chain. The immediate electron acceptor for the enzyme in this species is believed to be plastoquinone. Couples the redox reaction to proton translocation, and thus conserves the redox energy in a proton gradient. The sequence is that of NAD(P)H-quinone oxidoreductase subunit 1, chloroplastic from Nymphaea alba (White water-lily).